The chain runs to 299 residues: Non-structural protein V (299 aa).

The segment at 41-99 (DNPGQERATCREEKAGSSGLSKPCLSAIGSTEGGAPRIRGQGPGESDDDAETLGIPPRN) is disordered. The tract at residues 110–120 (YYVYDHSGEAV) is interaction with host STAT1. Residues 134 to 145 (GLDGDSTLSGGD) are compositionally biased toward low complexity. Residues 134 to 162 (GLDGDSTLSGGDNESENSDVDIGEPDTEG) are disordered. Over residues 146 to 160 (NESENSDVDIGEPDT) the composition is skewed to acidic residues. Zn(2+) contacts are provided by H232, C251, C255, C267, C269, C272, C276, and C279.

Belongs to the paramyxoviruses V protein family. As to quaternary structure, interacts with host IFIH1/MDA5 and DHX58/LGP2; these interactions are involved in the inhibition of the host type I interferon signaling pathway. Interacts with host TYK2; this interaction inhibits the type I interferon signaling pathway without affecting the type II pathway. Interacts with host IRF7; this interaction inhibits IRF7 translocation to the nucleus. Interacts with host CHUK. Interacts with host RELA/p65; this interaction inhibits the nuclear translocation of NF-KappaB. Interacts (via N-terminus) with host STAT1 and JAK1; these interactions inhibit STAT1 phosphorylation by Jak1 and thereby the type I interferon signaling pathway. Interacts (via C-terminus) with host STAT2; this interaction is involved in the inhibition of the host type I interferon signaling pathway. Forms a complex with host PPP1CA and PPP1CC; this interaction prevents dephosphorylation of host IFIH1/MDA5 and leads to the inhibition of the host type I interferon signaling pathway. Interacts with host IRF9; this interaction prevents the binding of IRF9 to STAT2 and thereby the type I interferon signaling pathway.

The protein localises to the host cytoplasm. Functionally, plays an essential role in the inhibition of host immune response. Prevents the establishment of cellular antiviral state by blocking interferon-alpha/beta (IFN-alpha/beta) production and signaling pathway. Interacts with host IFIH1/MDA5 and DHX58/LGP2 to inhibit the transduction pathway involved in the activation of IFN-beta promoter, thus protecting the virus against cell antiviral state. Blocks the type I interferon signaling pathway by interacting with host TYK2 and thereby inhibiting downstream STAT1 and STAT2 phosphorylation. Moderately affects the type II interferon signaling. The protein is Non-structural protein V (P/V) of Measles virus (strain Edmonston-Schwarz vaccine) (MeV).